A 278-amino-acid chain; its full sequence is Ribosomal RNA small subunit methyltransferase A (278 aa).

6 residues coordinate S-adenosyl-L-methionine: asparagine 27, leucine 29, glycine 54, glutamate 75, aspartate 101, and asparagine 122.

This sequence belongs to the class I-like SAM-binding methyltransferase superfamily. rRNA adenine N(6)-methyltransferase family. RsmA subfamily.

The protein localises to the cytoplasm. It catalyses the reaction adenosine(1518)/adenosine(1519) in 16S rRNA + 4 S-adenosyl-L-methionine = N(6)-dimethyladenosine(1518)/N(6)-dimethyladenosine(1519) in 16S rRNA + 4 S-adenosyl-L-homocysteine + 4 H(+). In terms of biological role, specifically dimethylates two adjacent adenosines (A1518 and A1519) in the loop of a conserved hairpin near the 3'-end of 16S rRNA in the 30S particle. May play a critical role in biogenesis of 30S subunits. The polypeptide is Ribosomal RNA small subunit methyltransferase A (Brucella anthropi (strain ATCC 49188 / DSM 6882 / CCUG 24695 / JCM 21032 / LMG 3331 / NBRC 15819 / NCTC 12168 / Alc 37) (Ochrobactrum anthropi)).